A 171-amino-acid chain; its full sequence is Putative defense protein (171 aa).

A signal peptide spans 1 to 23 (MKVYACLCAAVVMLVMTSRVSEA). One can recognise a Reelin domain in the interval 24–171 (RSTGAPLSAC…VQSAPIKIVS (148 aa)). Cys33 and Cys110 are oxidised to a cystine. Asn41 is a glycosylation site (N-linked (GlcNAc...) asparagine).

Belongs to the insect defense protein family.

It localises to the secreted. Its function is as follows. May have antimicrobial activity. In Bombyx mori (Silk moth), this protein is Putative defense protein.